A 233-amino-acid polypeptide reads, in one-letter code: Orotidine 5'-phosphate decarboxylase (233 aa).

Residues aspartate 12, lysine 34, 61–70 (DWKLHDIGAT), threonine 116, arginine 181, glutamine 190, glycine 210, and arginine 211 each bind substrate. Lysine 63 serves as the catalytic Proton donor.

The protein belongs to the OMP decarboxylase family. Type 1 subfamily. In terms of assembly, homodimer.

It catalyses the reaction orotidine 5'-phosphate + H(+) = UMP + CO2. It functions in the pathway pyrimidine metabolism; UMP biosynthesis via de novo pathway; UMP from orotate: step 2/2. Its function is as follows. Catalyzes the decarboxylation of orotidine 5'-monophosphate (OMP) to uridine 5'-monophosphate (UMP). The sequence is that of Orotidine 5'-phosphate decarboxylase from Caulobacter vibrioides (strain ATCC 19089 / CIP 103742 / CB 15) (Caulobacter crescentus).